A 216-amino-acid polypeptide reads, in one-letter code: Somatotropin (216 aa).

Residues 1 to 26 form the signal peptide; it reads MAAGPRTSALLAFALLCLPWTREVGA. Position 45 (His45) interacts with Zn(2+). Residues Cys78 and Cys189 are joined by a disulfide bond. Ser131 is modified (phosphoserine). Glu198 serves as a coordination point for Zn(2+). A disulfide bond links Cys206 and Cys214.

This sequence belongs to the somatotropin/prolactin family.

Its subcellular location is the secreted. In terms of biological role, plays an important role in growth control. Its major role in stimulating body growth is to stimulate the liver and other tissues to secrete IGF1. It stimulates both the differentiation and proliferation of myoblasts. It also stimulates amino acid uptake and protein synthesis in muscle and other tissues. The polypeptide is Somatotropin (GH1) (Sus scrofa (Pig)).